The primary structure comprises 100 residues: Aspartyl/glutamyl-tRNA(Asn/Gln) amidotransferase subunit C (100 aa).

This sequence belongs to the GatC family. Heterotrimer of A, B and C subunits.

It catalyses the reaction L-glutamyl-tRNA(Gln) + L-glutamine + ATP + H2O = L-glutaminyl-tRNA(Gln) + L-glutamate + ADP + phosphate + H(+). The catalysed reaction is L-aspartyl-tRNA(Asn) + L-glutamine + ATP + H2O = L-asparaginyl-tRNA(Asn) + L-glutamate + ADP + phosphate + 2 H(+). Functionally, allows the formation of correctly charged Asn-tRNA(Asn) or Gln-tRNA(Gln) through the transamidation of misacylated Asp-tRNA(Asn) or Glu-tRNA(Gln) in organisms which lack either or both of asparaginyl-tRNA or glutaminyl-tRNA synthetases. The reaction takes place in the presence of glutamine and ATP through an activated phospho-Asp-tRNA(Asn) or phospho-Glu-tRNA(Gln). The protein is Aspartyl/glutamyl-tRNA(Asn/Gln) amidotransferase subunit C of Staphylococcus aureus (strain Newman).